A 61-amino-acid polypeptide reads, in one-letter code: Short neurotoxin 1 (61 aa).

Cystine bridges form between C3/C23, C17/C40, C42/C53, and C54/C59.

It belongs to the three-finger toxin family. Short-chain subfamily. Type I alpha-neurotoxin sub-subfamily. In terms of tissue distribution, expressed by the venom gland.

It is found in the secreted. Binds with high affinity to muscular nicotinic acetylcholine receptors (nAChRs) (tested on Torpedo marmorata AChR, Kd=0.07 nM) and with low affinity to neuronal alpha-7/CHRNA7 nAChRs (tested on chimeric receptor, Kd=3 uM) and inhibit acetylcholine from binding to the receptor, thereby impairing neuromuscular transmission. Produces peripheral paralysis by blocking neuromuscular transmission at the postsynaptic site. The protein is Short neurotoxin 1 of Naja pallida (Red spitting cobra).